The chain runs to 205 residues: Inactive ribonuclease-like protein 9 (205 aa).

A signal peptide spans 1–26 (MMRTLITTHPLPLLLLPQQLLQPVQF). Intrachain disulfides connect cysteine 98–cysteine 153, cysteine 116–cysteine 168, and cysteine 123–cysteine 130. N-linked (GlcNAc...) asparagine glycans are attached at residues asparagine 131 and asparagine 143.

Belongs to the pancreatic ribonuclease family.

It is found in the secreted. Its function is as follows. Does not exhibit any ribonuclease activity. The polypeptide is Inactive ribonuclease-like protein 9 (RNASE9) (Pan troglodytes (Chimpanzee)).